The sequence spans 114 residues: Aspartate 1-decarboxylase (114 aa).

Ser25 acts as the Schiff-base intermediate with substrate; via pyruvic acid in catalysis. Ser25 is subject to Pyruvic acid (Ser). A substrate-binding site is contributed by Thr57. Tyr58 serves as the catalytic Proton donor. Substrate is bound at residue 73 to 75 (GAA).

The protein belongs to the PanD family. In terms of assembly, heterooctamer of four alpha and four beta subunits. Pyruvate serves as cofactor. In terms of processing, is synthesized initially as an inactive proenzyme, which is activated by self-cleavage at a specific serine bond to produce a beta-subunit with a hydroxyl group at its C-terminus and an alpha-subunit with a pyruvoyl group at its N-terminus.

It is found in the cytoplasm. It carries out the reaction L-aspartate + H(+) = beta-alanine + CO2. The protein operates within cofactor biosynthesis; (R)-pantothenate biosynthesis; beta-alanine from L-aspartate: step 1/1. Catalyzes the pyruvoyl-dependent decarboxylation of aspartate to produce beta-alanine. The sequence is that of Aspartate 1-decarboxylase from Thermotoga sp. (strain RQ2).